We begin with the raw amino-acid sequence, 145 residues long: Transcriptional regulator SlyA (145 aa).

An HTH marR-type domain is found at 2-135 (ELPLGSDLAR…LALLVARLEK (134 aa)). Positions 49 to 72 (QIQLAKAIGIEQPSLVRTLDQLEE) form a DNA-binding region, H-T-H motif.

It belongs to the SlyA family. In terms of assembly, homodimer.

In terms of biological role, transcription regulator that can specifically activate or repress expression of target genes. This Pectobacterium atrosepticum (strain SCRI 1043 / ATCC BAA-672) (Erwinia carotovora subsp. atroseptica) protein is Transcriptional regulator SlyA.